Consider the following 812-residue polypeptide: Phosphoenolpyruvate synthase (812 aa).

The active-site Tele-phosphohistidine intermediate is the histidine 430. Residues arginine 520, arginine 588, glutamate 690, glycine 711, serine 712, asparagine 713, and aspartate 714 each coordinate substrate. Glutamate 690 contacts Mg(2+). Residue aspartate 714 participates in Mg(2+) binding. Residue cysteine 761 is the Proton donor of the active site.

The protein belongs to the PEP-utilizing enzyme family. Mg(2+) serves as cofactor.

It carries out the reaction pyruvate + ATP + H2O = phosphoenolpyruvate + AMP + phosphate + 2 H(+). Its pathway is carbohydrate biosynthesis; gluconeogenesis. Its function is as follows. Catalyzes the phosphorylation of pyruvate to phosphoenolpyruvate. This is Phosphoenolpyruvate synthase (ppsA) from Helicobacter pylori (strain ATCC 700392 / 26695) (Campylobacter pylori).